The chain runs to 652 residues: Large subunit GTPase 1 homolog (652 aa).

Serine 93 bears the Phosphoserine mark. Residues 164–438 form the CP-type G domain; it reads WRQLWRVIER…LCDCPGLVMP (275 aa). 212–215 is a GTP binding site; that stretch reads NKAD. Serine 252 is modified (phosphoserine). The tract at residues 288-347 is disordered; that stretch reads LGEAASSEEDESEYEDCQEEEEDWQTCLEDSSSSDEEACGQDCKEGHTVDSEAQGRNTPQ. Over residues 293 to 311 the composition is skewed to acidic residues; it reads SSEEDESEYEDCQEEEEDW. GTP contacts are provided by residues 387–394 and 431–434; these read GYPNVGKS and DCPG. Residues 625–652 form a disordered region; that stretch reads RGAGKPWKKHGNRNKKEKSRRLYKHLDM. The span at 630 to 652 shows a compositional bias: basic residues; it reads PWKKHGNRNKKEKSRRLYKHLDM.

The protein belongs to the TRAFAC class YlqF/YawG GTPase family. LSG1 subfamily.

Its subcellular location is the cytoplasm. It is found in the endoplasmic reticulum. The protein resides in the nucleus. The protein localises to the cajal body. The catalysed reaction is GTP + H2O = GDP + phosphate + H(+). In terms of biological role, functions as a GTPase. May act by mediating the release of NMD3 from the 60S ribosomal subunit after export into the cytoplasm during the 60S ribosomal subunit maturation. The sequence is that of Large subunit GTPase 1 homolog from Bos taurus (Bovine).